A 2008-amino-acid chain; its full sequence is Histone-lysine N-methyltransferase SETD1B (2008 aa).

Positions 1 to 20 (MSFREIKAGEKAKHPEDHGK) are enriched in basic and acidic residues. Residues 1–42 (MSFREIKAGEKAKHPEDHGKKQSSSWINGMENSTQASTSVEK) form a disordered region. The span at 22–39 (QSSSWINGMENSTQASTS) shows a compositional bias: polar residues. Residues 111-199 (DEFYVGPVPP…NIIHVELDTK (89 aa)) enclose the RRM domain. Disordered regions lie at residues 249–390 (NLSS…SSYK), 402–652 (FPQS…APIT), 682–725 (PPGF…PPLP), 950–1172 (RKEP…DKRE), 1309–1328 (TKLPSAVEEEDRLPRTPGRE), 1345–1461 (VPSS…FTPT), 1563–1600 (VGASILPPPPPHSVLPKRRPGRPRRSPPSVLSLDMYSG), 1674–1712 (KEEEAHAKPKRQWRRQKKSPEHLPVIPSPEYSPPQPQFR), and 1814–1842 (EEPPADTQGMSIPAQPHASTRAGSERRSE). The span at 251 to 264 (SSVGSSVTPNSSTP) shows a compositional bias: low complexity. Composition is skewed to polar residues over residues 265–293 (FSHDTAYSSCRQDTPNSFSQFTPQSQGTP), 301–315 (PFSQDSTYSSRQTTP), 360–381 (HQFSTFKSHQQEPVQFSHTPPL), 405–414 (SEEQPFAQTS), and 456–491 (DSNSAPEPSAPSFSQTPERSETPGTPTMESEMQHNS). Residues 492–521 (LDSRIEMLLKEQRTKLPFLNEHDSDNEVRM) are compositionally biased toward basic and acidic residues. Positions 524-537 (SPISSSSSQLSPIP) are enriched in low complexity. Composition is skewed to polar residues over residues 540 to 560 (GSNSQPGYRAQTPSSRPSSTG) and 582 to 604 (ASLNQNSRGTSEASMTPIDQLNR). 2 stretches are compositionally biased toward basic and acidic residues: residues 606 to 617 (SKVETLEVKEMV) and 626 to 636 (EKMDESQHSSG). Positions 637–646 (EDMEISDDEM) are enriched in acidic residues. The span at 979-997 (ERDRDASDTTSDLSKKDAE) shows a compositional bias: basic and acidic residues. Positions 1011-1020 (LDSEGEEGDE) are enriched in acidic residues. Positions 1021 to 1031 (TSGKEEESSSE) are enriched in basic and acidic residues. 2 stretches are compositionally biased toward acidic residues: residues 1050-1094 (EEEE…EEDA) and 1105-1149 (ESSD…EDQD). Over residues 1150 to 1172 (REAMVAETEHEPASHELPDDKRE) the composition is skewed to basic and acidic residues. Residues 1345-1356 (VPSSTVPLPSTP) show a composition bias toward low complexity. Residues 1378 to 1392 (SIEEEIPRTPGRDIL) are compositionally biased toward basic and acidic residues. Positions 1418–1427 (LTGSSLTLSS) are enriched in low complexity. 2 stretches are compositionally biased toward basic residues: residues 1577-1587 (LPKRRPGRPRR) and 1681-1690 (KPKRQWRRQK). Residues 1699–1710 (IPSPEYSPPQPQ) show a composition bias toward pro residues. The short motif at 1840 to 1845 (RSEQRR) is the RxxxRR motif element. Positions 1869 to 1986 (KKLKFCKSHI…VNEEITYDYK (118 aa)) constitute an SET domain. Position 1985 (tyrosine 1985) interacts with S-adenosyl-L-methionine. The 17-residue stretch at 1992–2008 (VKIPCLCGSENCRGTLN) folds into the Post-SET domain.

The protein belongs to the class V-like SAM-binding methyltransferase superfamily. In terms of assembly, component of the SET1B/COMPASS complex.

The protein resides in the nucleus speckle. Its subcellular location is the chromosome. It catalyses the reaction L-lysyl(4)-[histone H3] + 3 S-adenosyl-L-methionine = N(6),N(6),N(6)-trimethyl-L-lysyl(4)-[histone H3] + 3 S-adenosyl-L-homocysteine + 3 H(+). Its function is as follows. Histone methyltransferase that specifically methylates 'Lys-4' of histone H3, when part of the SET1 histone methyltransferase (HMT) complex, but not if the neighboring 'Lys-9' residue is already methylated. H3 'Lys-4' methylation represents a specific tag for epigenetic transcriptional activation. The chain is Histone-lysine N-methyltransferase SETD1B (SETD1B) from Gallus gallus (Chicken).